The sequence spans 391 residues: Ectodysplasin-A (391 aa).

The span at 1–21 shows a compositional bias: basic and acidic residues; it reads MGYPEVERREPLPAAAPRERG. Positions 1-28 are disordered; it reads MGYPEVERREPLPAAAPRERGSQGCGCR. Residues 1–41 lie on the Cytoplasmic side of the membrane; it reads MGYPEVERREPLPAAAPRERGSQGCGCRGAPARAGEGNSCR. The helical; Signal-anchor for type II membrane protein transmembrane segment at 42-62 threads the bilayer; that stretch reads LFLGFFGLSLALHLLTLCCYL. Over 63 to 391 the chain is Extracellular; that stretch reads ELRSELRRER…AIRLGEAPAS (329 aa). Disordered stretches follow at residues 73–130 and 145–245; these read GAES…SQDG and SYSE…GTRE. A compositionally biased stretch (low complexity) spans 76-96; the sequence is SRFSGPGTPGTSGTLSSPGGL. One can recognise a Collagen-like domain in the interval 180-229; the sequence is GPPGPNGPPGPPGPPGPQGPPGIPGIPGIPGTTVMGPPGPPGPPGPQGPP. Composition is skewed to pro residues over residues 181–203 and 216–228; these read PPGPNGPPGPPGPPGPQGPPGIP and PPGPPGPPGPQGP. The THD domain occupies 249-385; it reads AVVHLQGQGS…HTTFFGAIRL (137 aa). N313 carries N-linked (GlcNAc...) asparagine glycosylation. C332 and C346 form a disulfide bridge. Residue N372 is glycosylated (N-linked (GlcNAc...) asparagine).

Belongs to the tumor necrosis factor family. Homotrimer. The homotrimers may then dimerize and form higher-order oligomers. In terms of processing, N-glycosylated. Processing by furin produces a secreted form.

The protein resides in the cell membrane. Its subcellular location is the secreted. In terms of biological role, cytokine which is involved in epithelial-mesenchymal signaling during morphogenesis of ectodermal organs. Functions as a ligand activating the DEATH-domain containing receptors EDAR and EDA2R. Isoform A1 binds only to the receptor EDAR, while isoform A2 binds exclusively to the receptor EDA2R. May also play a role in cell adhesion. Isoform A1 binds only to the receptor EDAR, while isoform A2 binds exclusively to the receptor EDA2R. Functionally, isoform A2 binds exclusively to the receptor EDA2R. The protein is Ectodysplasin-A (EDA) of Bos taurus (Bovine).